Consider the following 235-residue polypeptide: Acyl-protein thioesterase 1 (235 aa).

Catalysis depends on charge relay system residues Ser125, Asp181, and His213.

It belongs to the AB hydrolase superfamily. AB hydrolase 2 family.

The protein resides in the cytoplasm. The protein localises to the nucleus. The catalysed reaction is S-hexadecanoyl-L-cysteinyl-[protein] + H2O = L-cysteinyl-[protein] + hexadecanoate + H(+). Functionally, hydrolyzes fatty acids from S-acylated cysteine residues in proteins with a strong preference for palmitoylated G-alpha proteins over other acyl substrates. Mediates the deacylation of G-alpha proteins such as GPA1 in vivo, but has weak or no activity toward palmitoylated Ras proteins. Has weak lysophospholipase activity in vitro; however such activity may not exist in vivo. The protein is Acyl-protein thioesterase 1 of Gibberella zeae (strain ATCC MYA-4620 / CBS 123657 / FGSC 9075 / NRRL 31084 / PH-1) (Wheat head blight fungus).